A 478-amino-acid polypeptide reads, in one-letter code: DNA gyrase subunit B (478 aa).

The region spanning 319 to 438 (CELYLVEGDS…QGYLYVALPP (120 aa)) is the Toprim domain. E325, D403, and D405 together coordinate Mg(2+).

The protein belongs to the type II topoisomerase GyrB family. In terms of assembly, heterotetramer, composed of two GyrA and two GyrB chains. In the heterotetramer, GyrA contains the active site tyrosine that forms a transient covalent intermediate with DNA, while GyrB binds cofactors and catalyzes ATP hydrolysis. It depends on Mg(2+) as a cofactor. Mn(2+) serves as cofactor. The cofactor is Ca(2+).

Its subcellular location is the cytoplasm. The catalysed reaction is ATP-dependent breakage, passage and rejoining of double-stranded DNA.. Functionally, a type II topoisomerase that negatively supercoils closed circular double-stranded (ds) DNA in an ATP-dependent manner to modulate DNA topology and maintain chromosomes in an underwound state. Negative supercoiling favors strand separation, and DNA replication, transcription, recombination and repair, all of which involve strand separation. Also able to catalyze the interconversion of other topological isomers of dsDNA rings, including catenanes and knotted rings. Type II topoisomerases break and join 2 DNA strands simultaneously in an ATP-dependent manner. This is DNA gyrase subunit B (gyrB) from Eisenibacter elegans (Flexibacter elegans).